A 632-amino-acid polypeptide reads, in one-letter code: Probable potassium transport system protein Kup (632 aa).

12 consecutive transmembrane segments (helical) span residues 17–37, 60–80, 106–126, 146–166, 175–195, 210–230, 254–274, 292–312, 344–364, 370–390, 401–421, and 426–446; these read LFYL…TSPL, LISL…VLFL, TAIL…DAMI, LSEY…VVQS, FFGP…ISHI, AVSF…AVFL, WFLL…ALVL, ALLP…QAVI, IFVP…VLSF, LATA…IMAF, LPVA…FLGA, and IHDG…IMWT.

This sequence belongs to the HAK/KUP transporter (TC 2.A.72) family.

The protein localises to the cell inner membrane. It carries out the reaction K(+)(in) + H(+)(in) = K(+)(out) + H(+)(out). Functionally, transport of potassium into the cell. Likely operates as a K(+):H(+) symporter. The sequence is that of Probable potassium transport system protein Kup from Rhizobium rhizogenes (Agrobacterium rhizogenes).